Consider the following 225-residue polypeptide: Protein-L-isoaspartate O-methyltransferase (225 aa).

The active site involves Ser-75.

This sequence belongs to the methyltransferase superfamily. L-isoaspartyl/D-aspartyl protein methyltransferase family.

It localises to the cytoplasm. The enzyme catalyses [protein]-L-isoaspartate + S-adenosyl-L-methionine = [protein]-L-isoaspartate alpha-methyl ester + S-adenosyl-L-homocysteine. Functionally, catalyzes the methyl esterification of L-isoaspartyl residues in peptides and proteins that result from spontaneous decomposition of normal L-aspartyl and L-asparaginyl residues. It plays a role in the repair and/or degradation of damaged proteins. The sequence is that of Protein-L-isoaspartate O-methyltransferase from Stenotrophomonas maltophilia (strain K279a).